A 264-amino-acid chain; its full sequence is Acyl-[acyl-carrier-protein]--UDP-N-acetylglucosamine O-acyltransferase (264 aa).

Belongs to the transferase hexapeptide repeat family. LpxA subfamily. In terms of assembly, homotrimer.

The protein resides in the cytoplasm. The enzyme catalyses a (3R)-hydroxyacyl-[ACP] + UDP-N-acetyl-alpha-D-glucosamine = a UDP-3-O-[(3R)-3-hydroxyacyl]-N-acetyl-alpha-D-glucosamine + holo-[ACP]. It participates in glycolipid biosynthesis; lipid IV(A) biosynthesis; lipid IV(A) from (3R)-3-hydroxytetradecanoyl-[acyl-carrier-protein] and UDP-N-acetyl-alpha-D-glucosamine: step 1/6. Functionally, involved in the biosynthesis of lipid A, a phosphorylated glycolipid that anchors the lipopolysaccharide to the outer membrane of the cell. The polypeptide is Acyl-[acyl-carrier-protein]--UDP-N-acetylglucosamine O-acyltransferase (Chlorobium phaeobacteroides (strain DSM 266 / SMG 266 / 2430)).